Here is a 263-residue protein sequence, read N- to C-terminus: Mediator of RNA polymerase II transcription subunit 7 (263 aa).

Over residues 1–10 the composition is skewed to polar residues; that stretch reads MADAAQQRTL. Disordered stretches follow at residues 1-57, 101-122, and 222-247; these read MADA…PAEL, ITQL…SEPS, and GIAA…QKTI. Over residues 24–47 the composition is skewed to basic and acidic residues; that stretch reads FTPDNLKRLEEIKKEASKGEDGKP. Polar residues predominate over residues 101-111; the sequence is ITQLYPSSSPA. Positions 234 to 247 are enriched in basic and acidic residues; that stretch reads EDGRKESETSQKTI.

This sequence belongs to the Mediator complex subunit 7 family. Component of the Mediator complex.

The protein localises to the nucleus. Functionally, component of the Mediator complex, a coactivator involved in the regulated transcription of nearly all RNA polymerase II-dependent genes. Mediator functions as a bridge to convey information from gene-specific regulatory proteins to the basal RNA polymerase II transcription machinery. Mediator is recruited to promoters by direct interactions with regulatory proteins and serves as a scaffold for the assembly of a functional preinitiation complex with RNA polymerase II and the general transcription factors. The protein is Mediator of RNA polymerase II transcription subunit 7 (med7) of Aspergillus niger (strain ATCC MYA-4892 / CBS 513.88 / FGSC A1513).